Here is a 388-residue protein sequence, read N- to C-terminus: bZIP transcription factor 1-D (388 aa).

Disordered stretches follow at residues 1–49 (MGSS…PIPP), 103–249 (FAPY…GPTT), 261–316 (TASS…RKQA), and 348–388 (ELLS…KDTN). Composition is skewed to low complexity over residues 23 to 33 (PPATSSTATPT) and 117 to 129 (AAGT…TAGG). The segment covering 169 to 179 (SGASANGTISQ) has biased composition (polar residues). Residues 180-193 (SGESGSESSSEGSE) are compositionally biased toward low complexity. The span at 214–231 (RSSQNGVSPSPSQAQLKQ) shows a compositional bias: polar residues. In terms of domain architecture, bZIP spans 293 to 356 (ELKRQKRKQS…DELLSKNSSL (64 aa)). The interval 295-314 (KRQKRKQSNRDSARRSRLRK) is basic motif. The segment covering 302–316 (SNRDSARRSRLRKQA) has biased composition (basic and acidic residues). A leucine-zipper region spans residues 321-356 (LAQRAEVLKQENASLKDEVSRIRKEYDELLSKNSSL). Composition is skewed to basic and acidic residues over residues 359–369 (NVGDKQHKTDE) and 375–388 (KLQH…KDTN).

This sequence belongs to the bZIP family. As to expression, highly expressed in roots and at lower levels in stems and leaves.

It localises to the nucleus. Functionally, probable transcription factor that may be involved in responses to fungal pathogen infection and abiotic stresses. In Triticum aestivum (Wheat), this protein is bZIP transcription factor 1-D.